Here is a 499-residue protein sequence, read N- to C-terminus: L-arabinose isomerase (499 aa).

4 residues coordinate Mn(2+): E306, E333, H350, and H449.

It belongs to the arabinose isomerase family. Mn(2+) serves as cofactor.

The enzyme catalyses beta-L-arabinopyranose = L-ribulose. It participates in carbohydrate degradation; L-arabinose degradation via L-ribulose; D-xylulose 5-phosphate from L-arabinose (bacterial route): step 1/3. Catalyzes the conversion of L-arabinose to L-ribulose. The chain is L-arabinose isomerase from Aeromonas salmonicida (strain A449).